The following is a 1138-amino-acid chain: Pesticidal crystal protein Cry7Ab (1138 aa).

Belongs to the delta endotoxin family.

In terms of biological role, promotes colloidosmotic lysis by binding to the midgut epithelial cells of Coleoptera. This chain is Pesticidal crystal protein Cry7Ab (cry7Ab), found in Bacillus thuringiensis subsp. dakota.